Here is a 297-residue protein sequence, read N- to C-terminus: Coiled-coil domain-containing protein 159 (297 aa).

Positions 147–297 form a coiled coil; sequence EELELVREEV…SKSGRSFPPA (151 aa). The segment at 256-297 is disordered; the sequence is LRGHKGHQCLSPPLPSWDSDSDCDQDLSQPPFSKSGRSFPPA.

In terms of assembly, interacts with DYNLT2. Interacts with GGNBP1. Interacts with OSBP2.

Functionally, functions during spermatid development; may participate in the centrosome reduction procedure of spermatids and is required for the formation of the connecting piece/sperm head-tail coupling apparatus (HTCA) and the correct and tight attachment of the flagellum to the nuclear envelope. The protein is Coiled-coil domain-containing protein 159 (CCDC159) of Homo sapiens (Human).